The following is a 506-amino-acid chain: Adenylosuccinate synthetase (506 aa).

Residues 35 to 41 (GDEGKGK) and 63 to 65 (GHT) each bind GTP. Residue D36 is the Proton acceptor of the active site. 2 residues coordinate Mg(2+): D36 and G63. IMP contacts are provided by residues 36–39 (DEGK), 61–64 (NAGH), T212, R226, N304, T319, and R383. H64 serves as the catalytic Proton donor. 379-385 (VTTKRKR) contacts substrate. GTP contacts are provided by residues R385, 411-413 (KLD), and 494-496 (GVG).

This sequence belongs to the adenylosuccinate synthetase family. In terms of assembly, homodimer. The cofactor is Mg(2+).

It is found in the cytoplasm. The enzyme catalyses IMP + L-aspartate + GTP = N(6)-(1,2-dicarboxyethyl)-AMP + GDP + phosphate + 2 H(+). It functions in the pathway purine metabolism; AMP biosynthesis via de novo pathway; AMP from IMP: step 1/2. Functionally, plays an important role in the de novo pathway and in the salvage pathway of purine nucleotide biosynthesis. Catalyzes the first committed step in the biosynthesis of AMP from IMP. The protein is Adenylosuccinate synthetase of Drosophila yakuba (Fruit fly).